We begin with the raw amino-acid sequence, 471 residues long: Coronin-6 (471 aa).

WD repeat units follow at residues 79 to 119 (GHTG…PVRN), 129 to 169 (GHSK…VLLS), 173 to 212 (IHPD…VVAE), 216 to 259 (PHEG…EPVA), and 264 to 304 (DTSN…PFVH). Residues 410-433 (ILDVRPPASPRRSQSASEAPLSQH) form a disordered region. A compositionally biased stretch (low complexity) spans 419-429 (PRRSQSASEAP). Residues 426-468 (SEAPLSQHTLETLLEEIKALRDRVQAQEERITALENMLCELVD) are a coiled coil.

This Mus musculus (Mouse) protein is Coronin-6 (Coro6).